Here is a 278-residue protein sequence, read N- to C-terminus: Sulfur carrier protein FdhD (278 aa).

The Cysteine persulfide intermediate role is filled by cysteine 113. 251-256 (FCRNGR) lines the Mo-bis(molybdopterin guanine dinucleotide) pocket.

Belongs to the FdhD family.

It localises to the cytoplasm. Required for formate dehydrogenase (FDH) activity. Acts as a sulfur carrier protein that transfers sulfur from IscS to the molybdenum cofactor prior to its insertion into FDH. The protein is Sulfur carrier protein FdhD of Shewanella oneidensis (strain ATCC 700550 / JCM 31522 / CIP 106686 / LMG 19005 / NCIMB 14063 / MR-1).